The chain runs to 459 residues: O-phospho-L-seryl-tRNA:Cys-tRNA synthase 1 (459 aa).

Pyridoxal 5'-phosphate is bound by residues 152–153, Asn-257, and 280–282; these read AR and SGH. Lys-283 is modified (N6-(pyridoxal phosphate)lysine).

Belongs to the SepCysS family. As to quaternary structure, homodimer. Interacts with SepRS. Pyridoxal 5'-phosphate is required as a cofactor.

It carries out the reaction O-phospho-L-seryl-tRNA(Cys) + hydrogen sulfide + H(+) = L-cysteinyl-tRNA(Cys) + phosphate. In terms of biological role, converts O-phospho-L-seryl-tRNA(Cys) (Sep-tRNA(Cys)) to L-cysteinyl-tRNA(Cys) (Cys-tRNA(Cys)). This Methanococcoides burtonii (strain DSM 6242 / NBRC 107633 / OCM 468 / ACE-M) protein is O-phospho-L-seryl-tRNA:Cys-tRNA synthase 1.